The following is a 249-amino-acid chain: Low affinity immunoglobulin gamma Fc region receptor III-A (249 aa).

The first 16 residues, 1–16 (MWQLLPSTALLLVASA), serve as a signal peptide directing secretion. Residues 17–198 (RPQAADLPKA…IQGPPVPSTS (182 aa)) lie on the Extracellular side of the membrane. Ig-like C2-type domains follow at residues 24–104 (PKAV…LEVH) and 119–172 (EGEP…YFCR). 2 disulfide bridges follow: Cys-47-Cys-88 and Cys-127-Cys-171. N-linked (GlcNAc...) asparagine glycans are attached at residues Asn-55, Asn-63, Asn-166, and Asn-179. The chain crosses the membrane as a helical span at residues 199–219 (ALLPFWPHIPFAVVMALLFAV). Over 220-249 (DTGLYFAMQRHLHNSKRAWENSKVSWKQDP) the chain is Cytoplasmic.

Forms a heterooligomeric complex with ITAM-containing signaling subunits FCER1G. Interacts (via transmembrane domain) with signaling subunits; this interaction is a prerequisite for receptor complex expression on the cell surface and intracellular signal transduction. Binds the Fc region of antigen-complexed IgG.

Its subcellular location is the cell membrane. Functionally, receptor for the invariable Fc fragment of immunoglobulin gamma (IgG). Optimally activated upon binding of clustered antigen-IgG complexes displayed on cell surfaces, triggers lysis of antibody-coated cells, a process known as antibody-dependent cellular cytotoxicity (ADCC). Does not bind free monomeric IgG, thus avoiding inappropriate effector cell activation in the absence of antigenic trigger. Mediates IgG effector functions on natural killer (NK) cells. Binds antigen-IgG complexes generated upon infection and triggers NK cell-dependent cytokine production and degranulation to limit viral load and propagation. Fc-binding subunit that associates with FCER1G adapter to form functional signaling complexes. Following the engagement of antigen-IgG complexes, triggers phosphorylation of immunoreceptor tyrosine-based activation motif (ITAM)-containing adapter with subsequent activation of phosphatidylinositol 3-kinase signaling and sustained elevation of intracellular calcium that ultimately drive NK cell activation. Mediates enhanced ADCC in response to afucosylated IgGs. This Mustela putorius furo (European domestic ferret) protein is Low affinity immunoglobulin gamma Fc region receptor III-A.